The chain runs to 572 residues: Proline--tRNA ligase (572 aa).

It belongs to the class-II aminoacyl-tRNA synthetase family. ProS type 1 subfamily. In terms of assembly, homodimer. May form a tertiary complex with YbaK and t-RNA(Pro).

It localises to the cytoplasm. The enzyme catalyses tRNA(Pro) + L-proline + ATP = L-prolyl-tRNA(Pro) + AMP + diphosphate. Its function is as follows. Catalyzes the attachment of proline to tRNA(Pro) in a two-step reaction: proline is first activated by ATP to form Pro-AMP and then transferred to the acceptor end of tRNA(Pro). As ProRS can inadvertently accommodate and process non-cognate amino acids such as alanine and cysteine, to avoid such errors it has two additional distinct editing activities against alanine. One activity is designated as 'pretransfer' editing and involves the tRNA(Pro)-independent hydrolysis of activated Ala-AMP. The other activity is designated 'posttransfer' editing and involves deacylation of mischarged Ala-tRNA(Pro). The misacylated Cys-tRNA(Pro) is not edited by ProRS, but is probably edited in trans by YbaK. The polypeptide is Proline--tRNA ligase (Haemophilus influenzae (strain ATCC 51907 / DSM 11121 / KW20 / Rd)).